Consider the following 251-residue polypeptide: Phosphate import ATP-binding protein PstB 2 (251 aa).

One can recognise an ABC transporter domain in the interval 6 to 246 (FNIENLDLFY…PRDDRTRGYV (241 aa)). ATP is bound at residue 38-45 (GPSGCGKS).

Belongs to the ABC transporter superfamily. Phosphate importer (TC 3.A.1.7) family. In terms of assembly, the complex is composed of two ATP-binding proteins (PstB), two transmembrane proteins (PstC and PstA) and a solute-binding protein (PstS).

It localises to the cell inner membrane. The catalysed reaction is phosphate(out) + ATP + H2O = ADP + 2 phosphate(in) + H(+). In terms of biological role, part of the ABC transporter complex PstSACB involved in phosphate import. Responsible for energy coupling to the transport system. In Vibrio cholerae serotype O1 (strain ATCC 39315 / El Tor Inaba N16961), this protein is Phosphate import ATP-binding protein PstB 2.